A 127-amino-acid polypeptide reads, in one-letter code: Small ribosomal subunit protein uS11 (127 aa).

The protein belongs to the universal ribosomal protein uS11 family. In terms of assembly, part of the 30S ribosomal subunit. Interacts with proteins S7 and S18. Binds to IF-3.

Its function is as follows. Located on the platform of the 30S subunit, it bridges several disparate RNA helices of the 16S rRNA. Forms part of the Shine-Dalgarno cleft in the 70S ribosome. The sequence is that of Small ribosomal subunit protein uS11 from Streptococcus pyogenes serotype M1.